The sequence spans 142 residues: Putative pre-16S rRNA nuclease (142 aa).

It belongs to the YqgF nuclease family.

It localises to the cytoplasm. Functionally, could be a nuclease involved in processing of the 5'-end of pre-16S rRNA. The polypeptide is Putative pre-16S rRNA nuclease (Photobacterium profundum (strain SS9)).